We begin with the raw amino-acid sequence, 375 residues long: Histidine biosynthesis bifunctional protein HisB (375 aa).

The segment at 1–168 (MTPILFVDRD…GIAHELADAP (168 aa)) is histidinol-phosphatase. Aspartate 8 (nucleophile) is an active-site residue. Mg(2+) is bound by residues aspartate 8, aspartate 10, and aspartate 128. The Proton donor role is filled by aspartate 10. The segment at 169 to 375 (RRALVQRNTK…TALPTTKGTL (207 aa)) is imidazoleglycerol-phosphate dehydratase.

It in the N-terminal section; belongs to the histidinol-phosphatase family. The protein in the C-terminal section; belongs to the imidazoleglycerol-phosphate dehydratase family. Mg(2+) serves as cofactor.

Its subcellular location is the cytoplasm. It carries out the reaction D-erythro-1-(imidazol-4-yl)glycerol 3-phosphate = 3-(imidazol-4-yl)-2-oxopropyl phosphate + H2O. It catalyses the reaction L-histidinol phosphate + H2O = L-histidinol + phosphate. The protein operates within amino-acid biosynthesis; L-histidine biosynthesis; L-histidine from 5-phospho-alpha-D-ribose 1-diphosphate: step 6/9. It functions in the pathway amino-acid biosynthesis; L-histidine biosynthesis; L-histidine from 5-phospho-alpha-D-ribose 1-diphosphate: step 8/9. The chain is Histidine biosynthesis bifunctional protein HisB from Xanthomonas axonopodis pv. citri (strain 306).